Here is a 150-residue protein sequence, read N- to C-terminus: Transmembrane protein 35B (150 aa).

The N-terminal stretch at 1-21 (MSFRVGVLRVLLGVFFALTGA) is a signal peptide. Transmembrane regions (helical) follow at residues 62–82 (TAVG…PPVL), 84–104 (EISN…LVVL), and 111–131 (YVPA…HFLA).

This sequence belongs to the DoxX family.

The protein resides in the membrane. This is Transmembrane protein 35B from Mus musculus (Mouse).